The sequence spans 1384 residues: Protein Gawky (1384 aa).

4 disordered regions span residues M1 to G99, N148 to G227, T263 to T335, and V447 to S501. Positions M1–T205 are required for interaction with AGO1. 2 sufficient for miRNA-mediated silencing regions span residues M1–S605 and S605–L830. The span at H15–V24 shows a compositional bias: polar residues. Over residues S150–G171 the composition is skewed to low complexity. The segment at T205–K490 is minimal N-terminal region required for miRNA-mediated silencing. Basic and acidic residues predominate over residues D208–P225. 2 stretches are compositionally biased toward polar residues: residues A449–S475 and G485–S501. The region spanning I547 to N588 is the UBA domain. Disordered stretches follow at residues A607 to S626, Q809 to H841, T889 to W942, E962 to S1022, T1052 to T1102, S1188 to T1221, and G1318 to R1368. The segment covering Q809–P826 has biased composition (low complexity). The segment at Y862–G1115 is not required for interaction with AGO1 or miRNAs or for localization to P-bodies but necessary for miRNA-mediated silencing and for interaction with pAbp. The span at T898 to R924 shows a compositional bias: polar residues. Positions K940–N1215 are sufficient for miRNA-mediated silencing. The segment covering S1010–S1022 has biased composition (low complexity). The segment covering T1052–R1061 has biased composition (polar residues). Low complexity predominate over residues T1068–T1084. Residues S1117–E1189 enclose the RRM domain. Over residues S1188–P1203 the composition is skewed to polar residues. The interval P1200–D1384 is not required for interaction with AGO1 or miRNAs or for localization to P-bodies but necessary for miRNA-mediated silencing, dissociation from AGO1 and miRNAs and interaction with pAbp. A compositionally biased stretch (gly residues) spans T1211–G1220. Residues G1318 to T1349 show a composition bias toward low complexity. Residues W1350–P1365 are compositionally biased toward polar residues.

The protein belongs to the GW182 family. As to quaternary structure, component of the miRNA-directed RNA-induced silencing complex (miRISC), composed of at least AGO1 and gw, which bind mature miRNAs and targets the selective destruction of homologous RNAs. Interacts (via N-terminal region) with AGO1 (via Piwi domain); the interaction is essential for localization of AGO1 in P-bodies and for miRNA-mediated silencing. Interacts with pAbp/PABPC1; this interaction interferes with the binding of pAbp to eIF4G and is required for miRNA-mediated silencing. Interacts with CCR4-NOT complex members Not1, Rga/NOT2, twin/CCR4, Pop2 and NOT3/5 and with PAN complex members CG8232/PAN2 and CG11486/PAN3.

It localises to the cytoplasm. Its subcellular location is the P-body. Required for gene silencing mediated by micro-RNAs (miRNAs). Silences both polyadenylated and deadenylated mRNAs. Required for miRNA-mediated translational repression and mRNA decay. Not required for miRNA target recognition. Necessary to initiate but not to maintain silencing. Promotes mRNA deadenylation through the recruitment of the CCR4-NOT and PAN complexes and promotes decapping by the DCP1-DCP2 complex. Dissociates from silenced mRNAs after deadenylation. Required for completion of nuclear divisions during early embryonic development. This is Protein Gawky from Drosophila melanogaster (Fruit fly).